A 787-amino-acid chain; its full sequence is PAN2-PAN3 deadenylation complex subunit pan3 (787 aa).

Residues M1–G20 are disordered. Over residues P11–G20 the composition is skewed to low complexity. A C3H1-type zinc finger spans residues G23 to Q51. 3 disordered regions span residues E131–D162, T179–S210, and G226–T291. Low complexity-rich tracts occupy residues N143 to S154 and S200 to S210. The PABPC-interacting motif-2 (PAM-2) motif lies at K185 to S200. A compositionally biased stretch (polar residues) spans T265–S290. A pseudokinase domain region spans residues Q365–G650. Residues R422, D471–T478, and T545–K546 each bind ATP. Residues A651–T689 are a coiled coil. The tract at residues I690–L787 is knob domain.

This sequence belongs to the protein kinase superfamily. PAN3 family. As to quaternary structure, homodimer. Forms a heterotrimer with a catalytic subunit pan2 to form the poly(A)-nuclease (PAN) deadenylation complex. Interacts (via PAM-2 motif) with poly(A)-binding protein pabpc1 (via PABC domain), conferring substrate specificity of the enzyme complex. Interacts with the GW182 family proteins tnrc6a, tnrc6b and tnrc6c.

It localises to the cytoplasm. It is found in the P-body. Its function is as follows. Regulatory subunit of the poly(A)-nuclease (PAN) deadenylation complex, one of two cytoplasmic mRNA deadenylases involved in general and miRNA-mediated mRNA turnover. PAN specifically shortens poly(A) tails of RNA and the activity is stimulated by poly(A)-binding protein (PABP). PAN deadenylation is followed by rapid degradation of the shortened mRNA tails by the CCR4-NOT complex. Deadenylated mRNAs are then degraded by two alternative mechanisms, namely exosome-mediated 3'-5' exonucleolytic degradation, or deadenylation-dependent mRNA decaping and subsequent 5'-3' exonucleolytic degradation by XRN1. PAN3 acts as a positive regulator for PAN activity, recruiting the catalytic subunit PAN2 to mRNA via its interaction with RNA and PABP, and to miRNA targets via its interaction with GW182 family proteins. This is PAN2-PAN3 deadenylation complex subunit pan3 from Xenopus tropicalis (Western clawed frog).